The primary structure comprises 461 residues: F-box protein At3g62230 (461 aa).

One can recognise an F-box domain in the interval 7–55; sequence VDIISTLSDFLLVLIISNLSFKEALSTSRLSTRWRHICRETRNISFRED.

Part of a SCF (ASK-cullin-F-box) protein ligase complex. Interacts with ASK4.

It localises to the nucleus. Its pathway is protein modification; protein ubiquitination. In terms of biological role, component of SCF(ASK-cullin-F-box) E3 ubiquitin ligase complexes, which may mediate the ubiquitination and subsequent proteasomal degradation of target proteins. The sequence is that of F-box protein At3g62230 from Arabidopsis thaliana (Mouse-ear cress).